The primary structure comprises 152 residues: UPF0719 transmembrane protein MT2674.1 (152 aa).

Helical transmembrane passes span Val-21–Val-41, Val-62–Ala-82, Ile-92–Leu-112, and Pro-131–Leu-151.

This sequence belongs to the UPF0719 family.

It localises to the cell membrane. This chain is UPF0719 transmembrane protein MT2674.1, found in Mycobacterium tuberculosis (strain CDC 1551 / Oshkosh).